The following is a 348-amino-acid chain: Bombesin receptor-activated protein C6orf89 homolog (348 aa).

Residues 1–58 lie on the Cytoplasmic side of the membrane; it reads MDLAANEISIYDKLSETVDLVRQTGHQCGMSEKAIEKFIRQLLEKNEPQRGPPQYPLL. The helical transmembrane segment at 59-79 threads the bilayer; that stretch reads IAVYKVLLTLGLILFTAYFVI. The Extracellular segment spans residues 80–348; sequence QPFSSLAPEP…ICDGTTLSDL (269 aa).

In terms of assembly, homodimer. Interacts with BRS3. Interacts (via N-terminus) with SIN3B. In terms of processing, glycosylated.

The protein localises to the golgi apparatus membrane. It is found in the cytoplasm. Exhibits histone deacetylase (HDAC) enhancer properties. May play a role in cell cycle progression and wound repair of bronchial epithelial cells. The chain is Bombesin receptor-activated protein C6orf89 homolog from Mus musculus (Mouse).